The following is a 679-amino-acid chain: PHD finger protein PERSISTENT TAPETAL CELL 1 (679 aa).

The segment at Val620–Asp670 adopts a PHD-type zinc-finger fold.

In terms of biological role, probable transcriptional activator required for tapetal programmed cell death (PCD) and degeneration, and pollen development in anthers. The sequence is that of PHD finger protein PERSISTENT TAPETAL CELL 1 from Oryza sativa subsp. japonica (Rice).